A 371-amino-acid chain; its full sequence is tRNA-specific 2-thiouridylase MnmA (371 aa).

Residues 12–19 (GMSGGVDS) and methionine 38 each bind ATP. Residues 98-100 (NPD) are interaction with target base in tRNA. Cysteine 103 functions as the Nucleophile in the catalytic mechanism. Cysteine 103 and cysteine 200 are oxidised to a cystine. Glycine 127 provides a ligand contact to ATP. The segment at 150-152 (KDQ) is interaction with tRNA. Catalysis depends on cysteine 200, which acts as the Cysteine persulfide intermediate. The segment at 308–309 (RY) is interaction with tRNA.

It belongs to the MnmA/TRMU family.

Its subcellular location is the cytoplasm. The enzyme catalyses S-sulfanyl-L-cysteinyl-[protein] + uridine(34) in tRNA + AH2 + ATP = 2-thiouridine(34) in tRNA + L-cysteinyl-[protein] + A + AMP + diphosphate + H(+). In terms of biological role, catalyzes the 2-thiolation of uridine at the wobble position (U34) of tRNA, leading to the formation of s(2)U34. The sequence is that of tRNA-specific 2-thiouridylase MnmA from Oceanobacillus iheyensis (strain DSM 14371 / CIP 107618 / JCM 11309 / KCTC 3954 / HTE831).